A 100-amino-acid polypeptide reads, in one-letter code: Large ribosomal subunit protein bL28 (100 aa).

Residues 1 to 25 (MTRRCDITGKSVLSGNNVSHANNKS) form a disordered region. Positions 11-22 (SVLSGNNVSHAN) are enriched in polar residues.

It belongs to the bacterial ribosomal protein bL28 family.

This Acidiphilium cryptum (strain JF-5) protein is Large ribosomal subunit protein bL28.